A 211-amino-acid chain; its full sequence is uncharacterized protein (211 aa).

Positions 1-27 are cleaved as a signal peptide; the sequence is MKRTSAALVVFLILLFLGLLFLPMFIV.

This is an uncharacterized protein from Archaeoglobus fulgidus (strain ATCC 49558 / DSM 4304 / JCM 9628 / NBRC 100126 / VC-16).